Reading from the N-terminus, the 565-residue chain is Sulfite reductase [NADPH] hemoprotein beta-component (565 aa).

[4Fe-4S] cluster is bound by residues Cys-429, Cys-435, Cys-474, and Cys-478. Cys-478 is a binding site for siroheme.

The protein belongs to the nitrite and sulfite reductase 4Fe-4S domain family. Alpha(8)-beta(8). The alpha component is a flavoprotein, the beta component is a hemoprotein. It depends on siroheme as a cofactor. Requires [4Fe-4S] cluster as cofactor.

It carries out the reaction hydrogen sulfide + 3 NADP(+) + 3 H2O = sulfite + 3 NADPH + 4 H(+). Its pathway is sulfur metabolism; hydrogen sulfide biosynthesis; hydrogen sulfide from sulfite (NADPH route): step 1/1. Functionally, component of the sulfite reductase complex that catalyzes the 6-electron reduction of sulfite to sulfide. This is one of several activities required for the biosynthesis of L-cysteine from sulfate. The chain is Sulfite reductase [NADPH] hemoprotein beta-component from Shewanella baltica (strain OS185).